The sequence spans 341 residues: Heat-shock protein cognate (HSC) co-chaperone sgt12 (341 aa).

A disordered region spans residues 86-123; that stretch reads PSKEPASAGAQAQSTEAQQPKAGAPTPESDKLKSEGNA. TPR repeat units follow at residues 114 to 147, 148 to 181, and 182 to 215; these read SDKLKSEGNAAMARKEYSKAIDLYTQALSIAPAN, PIYLSNRAAAYSASGQHEKAAEDAELATVVDPKY, and SKAWSRLGLARFDMADYKGAKEAYEKGIEAEGNG. The tract at residues 232 to 280 is disordered; it reads EEANRGAEPPADDVDDAAGASRGAGGMPDLSSLASMLGGRGGGGGGMPD. Residues 269–278 are compositionally biased toward gly residues; sequence GGRGGGGGGM.

Belongs to the SGT family. In terms of assembly, forms homodimers. Component of the get4/get5/sgt2 sorting complex. Dimers of sgt2 bind directly a single get5. Binds HSC family members ssa1, sse1, hsp104 and hsc82 via its TPR domain.

Its subcellular location is the cytoplasm. Heat-shock protein cognate (HSC) co-chaperone that preferentially binds endoplasmic reticulum-destined tail-anchored (TA) proteins and directs them to the GET (guided entry of TA proteins) pathway via get4 and get5. Get4 and get5 form an obligate complex that catalyzes the transfer of tail-anchored proteins destined to the endoplasmic reticulum from sgt2 to the cytosolic targeting factor which then targets the TA protein to the ER membrane via get1/get2. This is Heat-shock protein cognate (HSC) co-chaperone sgt12 from Aspergillus fumigatus (strain ATCC MYA-4609 / CBS 101355 / FGSC A1100 / Af293) (Neosartorya fumigata).